The sequence spans 179 residues: Large ribosomal subunit protein uL5 (179 aa).

This sequence belongs to the universal ribosomal protein uL5 family. Part of the 50S ribosomal subunit; part of the 5S rRNA/L5/L18/L25 subcomplex. Contacts the 5S rRNA and the P site tRNA. Forms a bridge to the 30S subunit in the 70S ribosome.

This is one of the proteins that bind and probably mediate the attachment of the 5S RNA into the large ribosomal subunit, where it forms part of the central protuberance. In the 70S ribosome it contacts protein S13 of the 30S subunit (bridge B1b), connecting the 2 subunits; this bridge is implicated in subunit movement. Contacts the P site tRNA; the 5S rRNA and some of its associated proteins might help stabilize positioning of ribosome-bound tRNAs. The sequence is that of Large ribosomal subunit protein uL5 from Pseudomonas fluorescens (strain ATCC BAA-477 / NRRL B-23932 / Pf-5).